The primary structure comprises 163 residues: MKGKAGGKAADAAEKVAASNRRARFDYDVEDTWEAGLVLTGSEVKSLREGNVNLSDAYAMPRGEELWLLNCRIGEYQQAAHFGHAPLRDRKLLMNRAEIDRVRGKVEQRGYTLVPLRIYFKQGWAKVELGLARGRSHEDRRGAIAERESKREMDRALARGRRR.

Basic and acidic residues predominate over residues 138-157 (EDRRGAIAERESKREMDRAL). The interval 138-163 (EDRRGAIAERESKREMDRALARGRRR) is disordered.

This sequence belongs to the SmpB family.

The protein localises to the cytoplasm. Required for rescue of stalled ribosomes mediated by trans-translation. Binds to transfer-messenger RNA (tmRNA), required for stable association of tmRNA with ribosomes. tmRNA and SmpB together mimic tRNA shape, replacing the anticodon stem-loop with SmpB. tmRNA is encoded by the ssrA gene; the 2 termini fold to resemble tRNA(Ala) and it encodes a 'tag peptide', a short internal open reading frame. During trans-translation Ala-aminoacylated tmRNA acts like a tRNA, entering the A-site of stalled ribosomes, displacing the stalled mRNA. The ribosome then switches to translate the ORF on the tmRNA; the nascent peptide is terminated with the 'tag peptide' encoded by the tmRNA and targeted for degradation. The ribosome is freed to recommence translation, which seems to be the essential function of trans-translation. The chain is SsrA-binding protein from Anaeromyxobacter dehalogenans (strain 2CP-1 / ATCC BAA-258).